The chain runs to 205 residues: Octanoyltransferase (205 aa).

The BPL/LPL catalytic domain maps to 30–205 (NLSDELVWLL…ILKQEFHKIF (176 aa)). Residues 68-75 (RGGKYTYH), 140-142 (AFG), and 153-155 (GIA) contribute to the substrate site. C171 (acyl-thioester intermediate) is an active-site residue.

It belongs to the LipB family.

The protein resides in the cytoplasm. The enzyme catalyses octanoyl-[ACP] + L-lysyl-[protein] = N(6)-octanoyl-L-lysyl-[protein] + holo-[ACP] + H(+). Its pathway is protein modification; protein lipoylation via endogenous pathway; protein N(6)-(lipoyl)lysine from octanoyl-[acyl-carrier-protein]: step 1/2. Functionally, catalyzes the transfer of endogenously produced octanoic acid from octanoyl-acyl-carrier-protein onto the lipoyl domains of lipoate-dependent enzymes. Lipoyl-ACP can also act as a substrate although octanoyl-ACP is likely to be the physiological substrate. This chain is Octanoyltransferase, found in Wolbachia pipientis subsp. Culex pipiens (strain wPip).